We begin with the raw amino-acid sequence, 92 residues long: Small ribosomal subunit protein uS19 (92 aa).

The protein belongs to the universal ribosomal protein uS19 family.

Functionally, protein S19 forms a complex with S13 that binds strongly to the 16S ribosomal RNA. This Brucella anthropi (strain ATCC 49188 / DSM 6882 / CCUG 24695 / JCM 21032 / LMG 3331 / NBRC 15819 / NCTC 12168 / Alc 37) (Ochrobactrum anthropi) protein is Small ribosomal subunit protein uS19.